A 108-amino-acid chain; its full sequence is UPF0060 membrane protein Nham_2004 (108 aa).

A run of 4 helical transmembrane segments spans residues 5–25, 31–51, 61–81, and 88–108; these read AAYVGAAVAEIAGCFAFWAWL, VWWLAPGMVSLALFAYLLTLV, AAYGGVYIIASLGWLWSVEGL, and LTGAAICLLGAAIILFGPRQI.

Belongs to the UPF0060 family.

It is found in the cell inner membrane. The polypeptide is UPF0060 membrane protein Nham_2004 (Nitrobacter hamburgensis (strain DSM 10229 / NCIMB 13809 / X14)).